The sequence spans 358 residues: Carbamoyl phosphate synthase small chain (358 aa).

The interval 1–168 (MKRLLLLEDG…TKLAYASPGV (168 aa)) is CPSase. L-glutamine is bound by residues S45, G219, and G221. Residues 171–357 (NIVLVDFGLK…INMIDDFQQK (187 aa)) form the Glutamine amidotransferase type-1 domain. Residue C246 is the Nucleophile of the active site. L-glutamine is bound by residues M247, Q250, N288, G290, and Y291. Residues H330 and D332 contribute to the active site.

Belongs to the CarA family. In terms of assembly, composed of two chains; the small (or glutamine) chain promotes the hydrolysis of glutamine to ammonia, which is used by the large (or ammonia) chain to synthesize carbamoyl phosphate. Tetramer of heterodimers (alpha,beta)4.

It carries out the reaction hydrogencarbonate + L-glutamine + 2 ATP + H2O = carbamoyl phosphate + L-glutamate + 2 ADP + phosphate + 2 H(+). The catalysed reaction is L-glutamine + H2O = L-glutamate + NH4(+). It functions in the pathway amino-acid biosynthesis; L-arginine biosynthesis; carbamoyl phosphate from bicarbonate: step 1/1. Its pathway is pyrimidine metabolism; UMP biosynthesis via de novo pathway; (S)-dihydroorotate from bicarbonate: step 1/3. Functionally, small subunit of the glutamine-dependent carbamoyl phosphate synthetase (CPSase). CPSase catalyzes the formation of carbamoyl phosphate from the ammonia moiety of glutamine, carbonate, and phosphate donated by ATP, constituting the first step of 2 biosynthetic pathways, one leading to arginine and/or urea and the other to pyrimidine nucleotides. The small subunit (glutamine amidotransferase) binds and cleaves glutamine to supply the large subunit with the substrate ammonia. The chain is Carbamoyl phosphate synthase small chain from Streptococcus agalactiae serotype III (strain NEM316).